A 536-amino-acid polypeptide reads, in one-letter code: Butyrophilin-like protein 9 (536 aa).

The first 35 residues, 1–35, serve as a signal peptide directing secretion; it reads MADFSVFLGFLKQIPRCLSIFFTYLLFLQLWEVNS. 2 Ig-like V-type domains span residues 36–149 and 152–241; these read DKVW…WELE and GSGS…KEFV. Residues 36 to 257 lie on the Extracellular side of the membrane; it reads DKVWVLGPEE…FLPRMSPWKK (222 aa). Cysteines 59 and 133 form a disulfide. Asn102, Asn139, and Asn224 each carry an N-linked (GlcNAc...) asparagine glycan. An intrachain disulfide couples Cys173 to Cys227. A helical membrane pass occupies residues 258-278; that stretch reads AFVGTLVVLPLSLIVLTMLAL. The Cytoplasmic portion of the chain corresponds to 279–536; that stretch reads RYFYKLRSFQ…PAWAVNEAVS (258 aa). Residues 307-506 enclose the B30.2/SPRY domain; the sequence is DWRRSEGQAE…MTICSLPVRG (200 aa).

It belongs to the immunoglobulin superfamily. BTN/MOG family.

It localises to the membrane. This chain is Butyrophilin-like protein 9 (Btnl9), found in Mus musculus (Mouse).